A 585-amino-acid polypeptide reads, in one-letter code: Arginine--tRNA ligase (585 aa).

Residues 127 to 137 (PNTNKPLHVGH) carry the 'HIGH' region motif.

Belongs to the class-I aminoacyl-tRNA synthetase family. Monomer.

The protein resides in the cytoplasm. It carries out the reaction tRNA(Arg) + L-arginine + ATP = L-arginyl-tRNA(Arg) + AMP + diphosphate. In Borreliella burgdorferi (strain ATCC 35210 / DSM 4680 / CIP 102532 / B31) (Borrelia burgdorferi), this protein is Arginine--tRNA ligase (argS).